The following is a 390-amino-acid chain: 8-amino-7-oxononanoate synthase (390 aa).

Substrate is bound at residue R19. 106–107 (GY) is a binding site for pyridoxal 5'-phosphate. H131 lines the substrate pocket. Pyridoxal 5'-phosphate-binding residues include S176, H204, and T233. K236 carries the N6-(pyridoxal phosphate)lysine modification. Position 350 (T350) interacts with substrate.

Belongs to the class-II pyridoxal-phosphate-dependent aminotransferase family. BioF subfamily. In terms of assembly, homodimer. Pyridoxal 5'-phosphate is required as a cofactor.

The catalysed reaction is 6-carboxyhexanoyl-[ACP] + L-alanine + H(+) = (8S)-8-amino-7-oxononanoate + holo-[ACP] + CO2. It participates in cofactor biosynthesis; biotin biosynthesis. Functionally, catalyzes the decarboxylative condensation of pimeloyl-[acyl-carrier protein] and L-alanine to produce 8-amino-7-oxononanoate (AON), [acyl-carrier protein], and carbon dioxide. The sequence is that of 8-amino-7-oxononanoate synthase from Pseudomonas putida (strain GB-1).